The following is a 204-amino-acid chain: Somatotropin (204 aa).

The N-terminal stretch at 1–17 (MDRVVLLLSVLSLGVSS) is a signal peptide. At Gln18 the chain carries Pyrrolidone carboxylic acid. 2 cysteine pairs are disulfide-bonded: Cys69–Cys177 and Cys194–Cys202.

The protein belongs to the somatotropin/prolactin family.

The protein localises to the secreted. Growth hormone plays an important role in growth control and is involved in the regulation of several anabolic processes. Implicated as an osmoregulatory substance important for seawater adaptation. The polypeptide is Somatotropin (gh) (Seriola quinqueradiata (Five-ray yellowtail)).